The following is a 164-amino-acid chain: Peptidyl-prolyl cis-trans isomerase A-like 4A (164 aa).

The PPIase cyclophilin-type domain maps to 7 to 163 (FFDITVDGKP…KKITIADCGQ (157 aa)).

This sequence belongs to the cyclophilin-type PPIase family. PPIase A subfamily. As to expression, highly expressed in brain, ovary and mammary gland. Moderately expressed in lung, salivary gland, kidney, skin, adipose tissue, intestine and spleen. Weakly expressed in skeletal muscle, liver and stomach. Expressed in pleiomorphic and undifferentiated liposarcomas, osteosarcomas and breast carcinomas.

The protein localises to the cytoplasm. It carries out the reaction [protein]-peptidylproline (omega=180) = [protein]-peptidylproline (omega=0). In terms of biological role, PPIases accelerate the folding of proteins. It catalyzes the cis-trans isomerization of proline imidic peptide bonds in oligopeptides. This is Peptidyl-prolyl cis-trans isomerase A-like 4A from Homo sapiens (Human).